We begin with the raw amino-acid sequence, 108 residues long: Ribulose bisphosphate carboxylase small subunit (108 aa).

Belongs to the RuBisCO small chain family. As to quaternary structure, heterohexadecamer of 8 large and 8 small subunits.

In terms of biological role, ruBisCO catalyzes two reactions: the carboxylation of D-ribulose 1,5-bisphosphate, the primary event in carbon dioxide fixation, as well as the oxidative fragmentation of the pentose substrate. Both reactions occur simultaneously and in competition at the same active site. Although the small subunit is not catalytic it is essential for maximal activity. The chain is Ribulose bisphosphate carboxylase small subunit from Nitrobacter vulgaris.